Here is a 683-residue protein sequence, read N- to C-terminus: Phenoloxidase 3 (683 aa).

Residues 1 to 48 (MADKKNLLLLFDHPTEPVFMDKGGNGTVFDVPASYVTDRYNKMCKKVQ) constitute a propeptide that is removed on maturation. An N-linked (GlcNAc...) asparagine glycan is attached at Asn-25. The Cu cation site is built by His-209, His-213, and His-239. Glu-351 (proton acceptor) is an active-site residue. N-linked (GlcNAc...) asparagine glycosylation is present at Asn-358. Cu cation is bound by residues His-366, His-370, and His-406. Residues Asn-492 and Asn-514 are each glycosylated (N-linked (GlcNAc...) asparagine). 2 disulfides stabilise this stretch: Cys-574/Cys-617 and Cys-576/Cys-624.

The protein belongs to the tyrosinase family. It depends on Cu(2+) as a cofactor. Upon activation, a trypsin type protease cleaves prophenol oxidase to yield the active enzyme.

Its subcellular location is the secreted. The enzyme catalyses 2 L-dopa + O2 = 2 L-dopaquinone + 2 H2O. The catalysed reaction is L-tyrosine + O2 = L-dopaquinone + H2O. In terms of biological role, this is a copper-containing oxidase that functions in the formation of pigments such as melanins and other polyphenolic compounds. Catalyzes the rate-limiting conversions of tyrosine to DOPA, DOPA to DOPA-quinone and possibly 5,6 dihydroxyindole to indole-5'6 quinone. This Drosophila erecta (Fruit fly) protein is Phenoloxidase 3 (PPO3).